The primary structure comprises 756 residues: Ent-kaur-16-ene synthase, chloroplastic (756 aa).

Residues Asp-496, Asp-500, Asn-639, and Glu-647 each contribute to the Mg(2+) site. The short motif at 496–500 (DDFFD) is the DDXXD motif element.

This sequence belongs to the terpene synthase family. It depends on Mg(2+) as a cofactor. Highly expressed in panicles and at lower levels in leaves and stems.

The protein localises to the plastid. The protein resides in the chloroplast. It carries out the reaction ent-copalyl diphosphate = ent-kaur-16-ene + diphosphate. It participates in plant hormone biosynthesis; gibberellin biosynthesis. Functionally, catalyzes the conversion of ent-copalyl diphosphate to the gibberellin precursor ent-kaur-16-ene. This Oryza sativa subsp. japonica (Rice) protein is Ent-kaur-16-ene synthase, chloroplastic (KS1).